We begin with the raw amino-acid sequence, 270 residues long: Neurotrophic factor BDNF precursor form (270 aa).

The N-terminal stretch at M1–A18 is a signal peptide. A propeptide spanning residues A19 to R151 is cleaved from the precursor. N-linked (GlcNAc...) asparagine glycosylation occurs at N144. 3 cysteine pairs are disulfide-bonded: C164-C231, C209-C260, and C219-C262.

This sequence belongs to the NGF-beta family.

The protein localises to the secreted. Promotes the survival of neuronal populations that are all located either in the central nervous system or directly connected to it. This Cyprinus carpio (Common carp) protein is Neurotrophic factor BDNF precursor form (bdnf).